The sequence spans 530 residues: Protein SLOW WALKER 1 (530 aa).

WD repeat units follow at residues 50 to 89, 91 to 130, 133 to 173, 176 to 216, 220 to 258, 262 to 304, and 320 to 363; these read NLVS…SSRR, SFRD…ALRT, SHSA…VISD, GHKD…SNWI, NHGL…KMVC, SHNK…VTYS, and GSTR…DESR. The Nuclear localization signal motif lies at 392 to 399; the sequence is EKKGLKLT.

Expressed in cells undergoing active cell divisions, including functional megaspores and the female gametophytic cells. Accumulates in roots, stems, leaves, inflorescences and siliques.

It is found in the nucleus. The protein resides in the nucleolus. In terms of biological role, essential protein required for nuclear division and organization during embryo sac development in female gametophyte, probably by promoting rRNA biogenesis essential for the progression of the mitotic division cycles during gametogenesis. Involved in nucleolar processing of pre-18S ribosomal RNA. The polypeptide is Protein SLOW WALKER 1 (Arabidopsis thaliana (Mouse-ear cress)).